Here is a 137-residue protein sequence, read N- to C-terminus: Cellular retinoic acid-binding protein 1 (137 aa).

The Nuclear localization signal signature appears at 21–31 (RALGVNAMLRK). 132 to 134 (RIY) lines the all-trans-retinoate pocket.

Belongs to the calycin superfamily. Fatty-acid binding protein (FABP) family.

The protein localises to the cytoplasm. Its function is as follows. Cytosolic CRABPs may regulate the access of retinoic acid to the nuclear retinoic acid receptors. The polypeptide is Cellular retinoic acid-binding protein 1 (CRABP1) (Pelodiscus sinensis (Chinese softshell turtle)).